Consider the following 340-residue polypeptide: L-threonine 3-dehydrogenase (340 aa).

Residue cysteine 38 coordinates Zn(2+). Residues threonine 40 and histidine 43 each act as charge relay system in the active site. Zn(2+) is bound by residues histidine 63, glutamate 64, cysteine 93, cysteine 96, cysteine 99, and cysteine 107. NAD(+)-binding positions include isoleucine 175, aspartate 195, arginine 200, leucine 261–isoleucine 263, and isoleucine 285–tyrosine 286.

Belongs to the zinc-containing alcohol dehydrogenase family. As to quaternary structure, homotetramer. Zn(2+) serves as cofactor.

Its subcellular location is the cytoplasm. It carries out the reaction L-threonine + NAD(+) = (2S)-2-amino-3-oxobutanoate + NADH + H(+). It participates in amino-acid degradation; L-threonine degradation via oxydo-reductase pathway; glycine from L-threonine: step 1/2. In terms of biological role, catalyzes the NAD(+)-dependent oxidation of L-threonine to 2-amino-3-ketobutyrate. The polypeptide is L-threonine 3-dehydrogenase (Xanthomonas campestris pv. campestris (strain ATCC 33913 / DSM 3586 / NCPPB 528 / LMG 568 / P 25)).